The following is a 467-amino-acid chain: Cilia- and flagella-associated protein 97 (467 aa).

4 disordered regions span residues methionine 1–serine 20, isoleucine 76–proline 235, arginine 336–glutamine 370, and alanine 412–glutamine 467. The segment covering aspartate 124–glutamate 135 has biased composition (acidic residues). The span at aspartate 162–threonine 177 shows a compositional bias: polar residues. Residues aspartate 180 to serine 194 are compositionally biased toward low complexity. The span at serine 198–glutamate 216 shows a compositional bias: basic and acidic residues. Residues threonine 223–proline 235 are compositionally biased toward polar residues. Residues lysine 310 to lysine 387 are a coiled coil. The segment covering serine 421–serine 439 has biased composition (low complexity).

The protein belongs to the CFAP97 family.

This is Cilia- and flagella-associated protein 97 from Xenopus tropicalis (Western clawed frog).